The chain runs to 290 residues: MTVLLTGGTGRTAKHIAGIFRQTNVPFLVASRSSSAGTAENHRKFDWLDEETFPNALSVDQGMKPISVVWLCPPPLYDLATPVIKFIDFAVSQNVKKFVLLSASVIQKGGPAMGKIHGHLDSIKDVTYTVLRPTWFMENFSTKGEIQCEAIRRDSTVYSATENGKIPFISVVDIARVAACALTAETLKNSDHILQGPDLLTYDEVAQALTGVLGRKITHTKMTEGELAEKLMEEGVTPEEAYMHAAMDSMIKSGSEERVVSDEVKEWTGVKPRGFINFALSEKAAWRARK.

The protein belongs to the fgaFS/easG family. In terms of assembly, monomer.

It catalyses the reaction agroclavine + NADP(+) = didehydroagroclavine + NADPH + H(+). The protein operates within alkaloid biosynthesis; ergot alkaloid biosynthesis. In terms of biological role, agroclavine dehydrogenase; part of the gene cluster that mediates the biosynthesis of fungal ergot alkaloid. DmaW catalyzes the first step of ergot alkaloid biosynthesis by condensing dimethylallyl diphosphate (DMAP) and tryptophan to form 4-dimethylallyl-L-tryptophan. The second step is catalyzed by the methyltransferase easF that methylates 4-dimethylallyl-L-tryptophan in the presence of S-adenosyl-L-methionine, resulting in the formation of 4-dimethylallyl-L-abrine. The catalase easC and the FAD-dependent oxidoreductase easE then transform 4-dimethylallyl-L-abrine to chanoclavine-I which is further oxidized by easD in the presence of NAD(+), resulting in the formation of chanoclavine-I aldehyde. Agroclavine dehydrogenase easG then mediates the conversion of chanoclavine-I aldehyde to agroclavine via a non-enzymatic adduct reaction: the substrate is an iminium intermediate that is formed spontaneously from chanoclavine-I aldehyde in the presence of glutathione. The presence of easA is not required to complete this reaction. Further conversion of agroclavine to paspalic acid is a two-step process involving oxidation of agroclavine to elymoclavine and of elymoclavine to paspalic acid, the second step being performed by the elymoclavine oxidase cloA. Paspalic acid is then further converted to D-lysergic acid. Ergopeptines are assembled from D-lysergic acid and three different amino acids by the D-lysergyl-peptide-synthetases composed each of a monomudular and a trimodular nonribosomal peptide synthetase subunit. LpsB and lpsC encode the monomodular subunits responsible for D-lysergic acid activation and incorporation into the ergopeptine backbone. LpsA1 and A2 subunits encode the trimodular nonribosomal peptide synthetase assembling the tripeptide portion of ergopeptines. LpsA1 is responsible for formation of the major ergopeptine, ergotamine, and lpsA2 for alpha-ergocryptine, the minor ergopeptine of the total alkaloid mixture elaborated by C.purpurea. D-lysergyl-tripeptides are assembled by the nonribosomal peptide synthetases and released as N-(D-lysergyl-aminoacyl)-lactams. Cyclolization of the D-lysergyl-tripeptides is performed by the Fe(2+)/2-ketoglutarate-dependent dioxygenase easH which introduces a hydroxyl group into N-(D-lysergyl-aminoacyl)-lactam at alpha-C of the aminoacyl residue followed by spontaneous condensation with the terminal lactam carbonyl group. This Claviceps purpurea (Ergot fungus) protein is Agroclavine dehydrogenase.